The chain runs to 227 residues: UPF0758 protein Spro_4842 (227 aa).

The MPN domain maps to 105–227 (AMLNPRMTQH…CVSFAERGWL (123 aa)). The Zn(2+) site is built by histidine 176, histidine 178, and aspartate 189. Residues 176 to 189 (HNHPSGKAEPSHAD) carry the JAMM motif motif.

Belongs to the UPF0758 family. YicR subfamily.

This is UPF0758 protein Spro_4842 from Serratia proteamaculans (strain 568).